Consider the following 575-residue polypeptide: Transport inhibitor response 1-like protein Os04g0395600 (575 aa).

Residues 1 to 45 enclose the F-box domain; that stretch reads MTYFPEEVVEHIFSFLPAQRDRNTVSLVCKVWYEIERLSRRGVFV. Lysine 69 lines the 1D-myo-inositol hexakisphosphate pocket. The segment at 76–77 is interaction with auxin-responsive proteins; the sequence is DF. 1D-myo-inositol hexakisphosphate contacts are provided by residues 108 to 109 and arginine 340; that span reads KR. The tract at residues 343 to 348 is interaction with auxin-responsive proteins; it reads PSDFYV. Residue 396–398 coordinates 1D-myo-inositol hexakisphosphate; it reads RFR. Residues 400–404 are interaction with auxin-responsive proteins; that stretch reads CILEP. Arginine 431 lines the 1D-myo-inositol hexakisphosphate pocket. Positions 459–460 are interaction with auxin-responsive proteins; that stretch reads AF. 1D-myo-inositol hexakisphosphate-binding positions include 479 to 480 and arginine 504; that span reads RK.

Part of a SCF (SKP1-cullin-F-box) protein ligase complex. May interact with auxin and auxin-responsive proteins.

It is found in the nucleus. Its pathway is protein modification; protein ubiquitination. In Oryza sativa subsp. japonica (Rice), this protein is Transport inhibitor response 1-like protein Os04g0395600.